The primary structure comprises 129 residues: uncharacterized protein (129 aa).

This is an uncharacterized protein from Homo sapiens (Human).